We begin with the raw amino-acid sequence, 389 residues long: Phospho-N-acetylmuramoyl-pentapeptide-transferase (389 aa).

The next 10 helical transmembrane spans lie at 25-45, 74-94, 97-117, 134-154, 190-210, 222-242, 259-279, 286-306, 311-331, and 366-386; these read RAVM…PFVI, MGGV…ADWG, FIWI…VDDY, FFWQ…SVSE, ISYP…IVGS, GLVI…AYVM, AGEL…FLWF, VFMG…IAVI, IVLF…MLQV, and QVVV…LSTL.

The protein belongs to the glycosyltransferase 4 family. MraY subfamily. Mg(2+) is required as a cofactor.

It is found in the cell inner membrane. It carries out the reaction UDP-N-acetyl-alpha-D-muramoyl-L-alanyl-gamma-D-glutamyl-meso-2,6-diaminopimeloyl-D-alanyl-D-alanine + di-trans,octa-cis-undecaprenyl phosphate = di-trans,octa-cis-undecaprenyl diphospho-N-acetyl-alpha-D-muramoyl-L-alanyl-D-glutamyl-meso-2,6-diaminopimeloyl-D-alanyl-D-alanine + UMP. It participates in cell wall biogenesis; peptidoglycan biosynthesis. Its function is as follows. Catalyzes the initial step of the lipid cycle reactions in the biosynthesis of the cell wall peptidoglycan: transfers peptidoglycan precursor phospho-MurNAc-pentapeptide from UDP-MurNAc-pentapeptide onto the lipid carrier undecaprenyl phosphate, yielding undecaprenyl-pyrophosphoryl-MurNAc-pentapeptide, known as lipid I. The sequence is that of Phospho-N-acetylmuramoyl-pentapeptide-transferase from Ralstonia pickettii (strain 12J).